Reading from the N-terminus, the 392-residue chain is Nicotinate phosphoribosyltransferase (392 aa).

His214 is subject to Phosphohistidine; by autocatalysis.

Belongs to the NAPRTase family. In terms of processing, transiently phosphorylated on a His residue during the reaction cycle. Phosphorylation strongly increases the affinity for substrates and increases the rate of nicotinate D-ribonucleotide production. Dephosphorylation regenerates the low-affinity form of the enzyme, leading to product release.

It carries out the reaction nicotinate + 5-phospho-alpha-D-ribose 1-diphosphate + ATP + H2O = nicotinate beta-D-ribonucleotide + ADP + phosphate + diphosphate. It functions in the pathway cofactor biosynthesis; NAD(+) biosynthesis; nicotinate D-ribonucleotide from nicotinate: step 1/1. Catalyzes the synthesis of beta-nicotinate D-ribonucleotide from nicotinate and 5-phospho-D-ribose 1-phosphate at the expense of ATP. The sequence is that of Nicotinate phosphoribosyltransferase from Xanthomonas axonopodis pv. citri (strain 306).